Consider the following 153-residue polypeptide: uncharacterized protein (153 aa).

The disordered stretch occupies residues 17–78 (IYIHTPHPHP…HTTLSNLSLN (62 aa)). The span at 22-38 (PHPHPHPHPHTPTHTHP) shows a compositional bias: basic residues.

This is an uncharacterized protein from Saccharomyces cerevisiae (strain ATCC 204508 / S288c) (Baker's yeast).